The following is a 1387-amino-acid chain: MEVLMAERANLVFHNKVIDGTAMKRLISRLIEHFGMAYTSHILDQVKTLGFQQATATSISLGIDDLLTIPSKRWLVQDAEQQSLILEKQHHYGNVHAVEKLRQSIEIWYATSEFLRQEMKPNFRMTDPFNPVHIMSFSGARGNASQVHQLVGMRGLMADPQGQMIDLPIQSNLREGLSLTEYIISCYGARKGVVDTAVRTSDAGYLTRRLVEVVQHIVVRRKDCGTVRGISVSPRNGMMPERVFIQTLIGRVLADDIYLGPRCIATRNQDIGSGLVNRFITFRAQPIYIRTPFTCRSTSWICRLCYGRSPTHGDLAELGEAVGIIAGQSIGEPGTQLTLRTFHTGGVFTGGTAEHVRAPSNGKIKFNEDLVHPTRTRHGHPAFLCSIDLYVTIESEDIIHNVNIPPKSFLLVQNDQYVESEQVIAEIRAGTSTLNFKEKVRKHIYSDSEGEMHWNTDVYHAPAFTYGNVHLLPKTSHLWILLGEPCRSDLVALSIHKDQDQMNAHSLSVKRRYISNLSVTNDQARHKFFSSDFSGKKEDRITDYSELNRIGHCNLPYLAILHANSDLLAKRRRNRFIIPLQSIQEHENELMPSSGISIEIPIHGIFRKKSIIAYFDDPRYRRKSSGITKYGTIEVHSIVKKEDLIEYRGVKEFRPKYQMKVDRFFFIPEEVHILPGSSSIMVRNNSIIGVDTQITLTTRSRVGGLVRVERKKKRIELKIFSGDIHFPGETDKISRHSGVLIPPGTGKTNSKESKKWKNWIYVQRITPTKKKYFVLVRPVVTYEITDGINLATLFFPDLLQERDNVQLRVVNYILYGTGKPIRGFYDTSIQLVRTCLVLNWVQDKKSSSIEEARTSFVEIRINSLIRDFLKIDLAKSPILYTGKRKDPSGSGLISENGSDRTNINPFSSSFFYSKARIKESLNQNQGTIHTLLNRNKECQSLIILSSSNCFRMGPFNDVKYHNVIKESIQKDPLIQIRNSLGPLGTALQIANFYSFSHLITYNQILVTNYLQLDNLKQSFQVLKYYLMDENGKIYNPDRCCNIILNPFNLNWFFLHHNYCEETSTTMSLGQFICENVCIAKNGPHLKPGQVLIVQVDSVVIRSAKPYLATPGATVHGHYGEILYEGDTLVTFIYEKSRSGDITQGLPKVEQVLEVRSIDSISMNLEKRVEGWNECITRNLGIPWGFLIGAELTIVQSRISLVNKIQKVYRSQGVQIHNRHIEIIVRQITSKVLVSEDGMSNVFLPGEFIGLLRAERMGRALEEAICYQAVLLGITKASLNTQSFISEASFQETARVLAKAALRGRIDWLKGLKENVVLGGMIPVGTGFKGLVPPSRQHKNIPLETKNKNLFEGEMRDILFHHRKFFDSCLSKNFHDTPEQSFIGFNDS.

Positions 224, 295, 302, and 305 each coordinate Zn(2+).

It belongs to the RNA polymerase beta' chain family. RpoC2 subfamily. In terms of assembly, in plastids the minimal PEP RNA polymerase catalytic core is composed of four subunits: alpha, beta, beta', and beta''. When a (nuclear-encoded) sigma factor is associated with the core the holoenzyme is formed, which can initiate transcription. Requires Zn(2+) as cofactor.

It localises to the plastid. Its subcellular location is the chloroplast. The enzyme catalyses RNA(n) + a ribonucleoside 5'-triphosphate = RNA(n+1) + diphosphate. Its function is as follows. DNA-dependent RNA polymerase catalyzes the transcription of DNA into RNA using the four ribonucleoside triphosphates as substrates. This Panax ginseng (Korean ginseng) protein is DNA-directed RNA polymerase subunit beta''.